We begin with the raw amino-acid sequence, 505 residues long: Maturase K (505 aa).

The protein belongs to the intron maturase 2 family. MatK subfamily.

It localises to the plastid. It is found in the chloroplast. In terms of biological role, usually encoded in the trnK tRNA gene intron. Probably assists in splicing its own and other chloroplast group II introns. This Ficus carica (Common fig) protein is Maturase K.